The sequence spans 125 residues: uncharacterized protein (125 aa).

Residues 7-29 (NCMFLYVYTDVCVRLCASIFYIM) form a helical membrane-spanning segment.

It localises to the membrane. This is an uncharacterized protein from Saccharomyces cerevisiae (strain ATCC 204508 / S288c) (Baker's yeast).